Consider the following 546-residue polypeptide: DNA replication factor Cdt1 (546 aa).

Residues 1–11 are compositionally biased toward basic and acidic residues; that stretch reads MEQRRVTDFFA. The PIP-box K+4 motif motif lies at 1–23; sequence MEQRRVTDFFARRRPGPPRIAPP. Disordered stretches follow at residues 1–118 and 143–165; these read MEQR…QDQD and SAQDAGESCTPEAEGRPEEPCGE. Residues 28–45 show a composition bias toward low complexity; it reads RTPSPARPALRAPASATS. Residue Thr29 is modified to Phosphothreonine; by MAPK8. Ser31 is modified (phosphoserine). Positions 68-70 match the Cyclin-binding motif motif; sequence RRL. Ser93 bears the Phosphoserine; by MAPK8 mark. An interaction with GMNN region spans residues 150–190; that stretch reads SCTPEAEGRPEEPCGEKAPAYQRFHALAQPGLPGLVLPYKY. A compositionally biased stretch (basic and acidic residues) spans 155–164; the sequence is AEGRPEEPCG. The residue at position 318 (Ser318) is a Phosphoserine; by MAPK8. Residues Ser380 and Ser394 each carry the phosphoserine modification. The interval 383–415 is disordered; that stretch reads ALRSAAPSSPGSPRPALPATPPATPPAASPSAL. The segment covering 392 to 410 has biased composition (pro residues); that stretch reads PGSPRPALPATPPATPPAA. Residues 451-546 are interaction with LRWD1; sequence LERLPELARV…AHQTRAEEGL (96 aa).

It belongs to the Cdt1 family. Interacts with GMNN; the interaction inhibits binding of the MCM complex to origins of replication. Interacts with MCM6. Interacts with CDC6; are mutually dependent on one another for loading MCM complexes onto chromatin. Interacts with PCNA. Interacts with LRWD1 during G1 phase and during mitosis. Interacts with NDC80 subunit of the NDC80 complex; leading to kinetochore localization. Interacts with GRWD1; origin binding of GRWD1 is dependent on CDT1. Interacts with KAT7. Interacts with ubiquitin-binding protein FAF1; the interaction is likely to promote CDT1 degradation. Post-translationally, two independent E3 ubiquitin ligase complexes, SCF(SKP2) and the DCX(DTL) complex, mediated CDT1 degradation in S phase. Ubiquitinated by the DCX(DTL) complex, in response to DNA damage, leading to its degradation. Ubiquitination by the DCX(DTL) complex is necessary to ensure proper cell cycle regulation and is PCNA-dependent: interacts with PCNA via its PIP-box, while the presence of the containing the 'K+4' motif in the PIP box, recruit the DCX(DTL) complex, leading to its degradation. Phosphorylation at Thr-29 by CDK2 targets CDT1 for ubiquitination by SCF(SKP2) E3 ubiquitin ligase and subsequent degradation. The interaction with GMNN protects it against ubiquitination. Deubiquitinated by USP37. Ubiquitinated and degraded by the SCF(FBXO31) complex during the G2 phase to prevent re-replication. In terms of processing, phosphorylation by cyclin A-dependent kinases at Thr-29 targets CDT1 for ubiquitynation by SCF(SKP2) E3 ubiquitin ligase and subsequent degradation. Phosphorylated at Thr-29 by MAPK8/JNK1, which blocks replication licensing in response to stress. Binding to GMNN is not affected by phosphorylation.

The protein resides in the nucleus. It is found in the chromosome. It localises to the centromere. The protein localises to the kinetochore. In terms of biological role, required for both DNA replication and mitosis. DNA replication licensing factor, required for pre-replication complex assembly. Cooperates with CDC6 and the origin recognition complex (ORC) during G1 phase of the cell cycle to promote the loading of the mini-chromosome maintenance (MCM) complex onto DNA to generate pre-replication complexes (pre-RC). Required also for mitosis by promoting stable kinetochore-microtubule attachments. Potential oncogene. In Homo sapiens (Human), this protein is DNA replication factor Cdt1.